Here is a 643-residue protein sequence, read N- to C-terminus: 1-deoxy-D-xylulose-5-phosphate synthase (643 aa).

Thiamine diphosphate contacts are provided by residues His71 and 112–114; that span reads SHA. Residue Asp144 participates in Mg(2+) binding. Residues 145–146, Asn173, Tyr284, and Glu365 each bind thiamine diphosphate; that span reads GA. Asn173 lines the Mg(2+) pocket.

Belongs to the transketolase family. DXPS subfamily. As to quaternary structure, homodimer. Requires Mg(2+) as cofactor. It depends on thiamine diphosphate as a cofactor.

The enzyme catalyses D-glyceraldehyde 3-phosphate + pyruvate + H(+) = 1-deoxy-D-xylulose 5-phosphate + CO2. It participates in metabolic intermediate biosynthesis; 1-deoxy-D-xylulose 5-phosphate biosynthesis; 1-deoxy-D-xylulose 5-phosphate from D-glyceraldehyde 3-phosphate and pyruvate: step 1/1. In terms of biological role, catalyzes the acyloin condensation reaction between C atoms 2 and 3 of pyruvate and glyceraldehyde 3-phosphate to yield 1-deoxy-D-xylulose-5-phosphate (DXP). This Mycobacterium leprae (strain Br4923) protein is 1-deoxy-D-xylulose-5-phosphate synthase.